Here is a 338-residue protein sequence, read N- to C-terminus: 3-keto-steroid reductase erg27 (338 aa).

L16, T44, K50, and D75 together coordinate NADP(+). Catalysis depends on proton donor residues S180 and Y203. The NADP(+) site is built by Y203, K207, and T236. K207 acts as the Lowers pKa of active site Tyr in catalysis.

This sequence belongs to the short-chain dehydrogenases/reductases (SDR) family. ERG27 subfamily. Heterotetramer of erg25, erg26, erg27 and erg28. Erg28 acts as a scaffold to tether erg27 and other 4,4-demethylation-related enzymes, forming a demethylation enzyme complex, in the endoplasmic reticulum.

The catalysed reaction is 3-dehydro-4alpha-methylzymosterol + NADPH + H(+) = 4alpha-methylzymosterol + NADP(+). The protein operates within steroid biosynthesis; zymosterol biosynthesis; zymosterol from lanosterol: step 5/6. It functions in the pathway steroid metabolism; ergosterol biosynthesis. 3-keto-steroid reductase; part of the third module of ergosterol biosynthesis pathway that includes by the late steps of the pathway. Erg27 is a catalytic component of the C-4 demethylation complex that catalyze the reduction of the keto group on the C-3. The third module or late pathway involves the ergosterol synthesis itself through consecutive reactions that mainly occur in the endoplasmic reticulum (ER) membrane. Firstly, the squalene synthase erg9 catalyzes the condensation of 2 farnesyl pyrophosphate moieties to form squalene, which is the precursor of all steroids. Secondly, squalene is converted into lanosterol by the consecutive action of the squalene epoxidase erg1 and the lanosterol synthase erg7. The lanosterol 14-alpha-demethylase erg11/cyp1 catalyzes C14-demethylation of lanosterol to produce 4,4'-dimethyl cholesta-8,14,24-triene-3-beta-ol. In the next steps, a complex process involving various demethylation, reduction and desaturation reactions catalyzed by the C-14 reductase erg24 and the C-4 demethylation complex erg25-erg26-erg27 leads to the production of zymosterol. Erg28 likely functions in the C-4 demethylation complex reaction by tethering erg26 and Erg27 to the endoplasmic reticulum or to facilitate interaction between these proteins. Then, the sterol 24-C-methyltransferase erg6 catalyzes the methyl transfer from S-adenosyl-methionine to the C-24 of zymosterol to form fecosterol. The C-8 sterol isomerase erg2 catalyzes the reaction which results in unsaturation at C-7 in the B ring of sterols and thus converts fecosterol to episterol. The sterol-C5-desaturases erg31 and erg32 then catalyze the introduction of a C-5 double bond in the B ring to produce 5-dehydroepisterol. The C-22 sterol desaturase erg5 further converts 5-dehydroepisterol into ergosta-5,7,22,24(28)-tetraen-3beta-ol by forming the C-22(23) double bond in the sterol side chain. Finally, ergosta-5,7,22,24(28)-tetraen-3beta-ol is substrate of the C-24(28) sterol reductase erg4 to produce ergosterol. In the genus Schizosaccharomyces, a second route exists between lanosterol and fecosterol, via the methylation of lanosterol to eburicol by erg6, followed by C14-demethylation by erg11/cyp1 and C4-demethylation by the demethylation complex erg25-erg26-erg27. In Schizosaccharomyces pombe (strain 972 / ATCC 24843) (Fission yeast), this protein is 3-keto-steroid reductase erg27.